Consider the following 291-residue polypeptide: tRNA-cytidine(32) 2-sulfurtransferase (291 aa).

Positions 36–41 (SGGKDS) match the PP-loop motif motif. Residues Cys-111, Cys-114, and Cys-202 each contribute to the [4Fe-4S] cluster site. The disordered stretch occupies residues 259-291 (DPWLDAEDEEAEDCGEPSAGDGVVSLGGARGGR). Residues 262 to 273 (LDAEDEEAEDCG) show a composition bias toward acidic residues.

It belongs to the TtcA family. In terms of assembly, homodimer. Requires Mg(2+) as cofactor. It depends on [4Fe-4S] cluster as a cofactor.

It is found in the cytoplasm. The enzyme catalyses cytidine(32) in tRNA + S-sulfanyl-L-cysteinyl-[cysteine desulfurase] + AH2 + ATP = 2-thiocytidine(32) in tRNA + L-cysteinyl-[cysteine desulfurase] + A + AMP + diphosphate + H(+). It participates in tRNA modification. Its function is as follows. Catalyzes the ATP-dependent 2-thiolation of cytidine in position 32 of tRNA, to form 2-thiocytidine (s(2)C32). The sulfur atoms are provided by the cysteine/cysteine desulfurase (IscS) system. This chain is tRNA-cytidine(32) 2-sulfurtransferase, found in Anaeromyxobacter sp. (strain K).